The following is a 364-amino-acid chain: Peptide chain release factor 1 (364 aa).

Position 232 is an N5-methylglutamine (Gln232).

Belongs to the prokaryotic/mitochondrial release factor family. Post-translationally, methylated by PrmC. Methylation increases the termination efficiency of RF1.

The protein resides in the cytoplasm. Peptide chain release factor 1 directs the termination of translation in response to the peptide chain termination codons UAG and UAA. The protein is Peptide chain release factor 1 of Sorangium cellulosum (strain So ce56) (Polyangium cellulosum (strain So ce56)).